Here is a 639-residue protein sequence, read N- to C-terminus: CREB3 regulatory factor (639 aa).

The interval P302–S422 is disordered. Over residues S310 to S328 the composition is skewed to low complexity. The segment covering L339–K351 has biased composition (polar residues). Acidic residues predominate over residues E355–D370. Residues E371 to S380 show a composition bias toward basic and acidic residues. Acidic residues predominate over residues E381–S401. Residues T521–E584 enclose the bZIP domain. The interval R523–K532 is basic motif. Residues L533 to L540 are leucine-zipper.

This sequence belongs to the bZIP family. CREBRF subfamily. In terms of assembly, interacts (via leucine-zipper domain) with CREB3 (via leucine-zipper domain); the interaction promotes CREB3 degradation. Probably degraded by the proteasome.

It is found in the nucleus. In terms of biological role, acts as a negative regulator of the endoplasmic reticulum stress response or unfolded protein response (UPR). Represses the transcriptional activity of CREB3 during the UPR. Recruits CREB3 into nuclear foci. This chain is CREB3 regulatory factor (CREBRF), found in Homo sapiens (Human).